The chain runs to 406 residues: Tryptophan 2,3-dioxygenase (406 aa).

Ser19 is subject to Phosphoserine. Residues 72-76 and Arg144 each bind substrate; that span reads FIITH. His328 contributes to the heme binding site. Thr342 contributes to the substrate binding site.

This sequence belongs to the tryptophan 2,3-dioxygenase family. In terms of assembly, homotetramer. Dimer of dimers. Heme serves as cofactor.

It catalyses the reaction L-tryptophan + O2 = N-formyl-L-kynurenine. It participates in amino-acid degradation; L-tryptophan degradation via kynurenine pathway; L-kynurenine from L-tryptophan: step 1/2. In terms of biological role, heme-dependent dioxygenase that catalyzes the oxidative cleavage of the L-tryptophan (L-Trp) pyrrole ring and converts L-tryptophan to N-formyl-L-kynurenine. Catalyzes the oxidative cleavage of the indole moiety. This is Tryptophan 2,3-dioxygenase from Mus musculus (Mouse).